A 299-amino-acid chain; its full sequence is Protein LacX, chromosomal (299 aa).

The polypeptide is Protein LacX, chromosomal (lacX) (Lactococcus lactis subsp. lactis (Streptococcus lactis)).